The sequence spans 228 residues: Ephrin-A5 (228 aa).

Residues 1–20 (MLHVEMLTLVFLVLWMCVFS) form the signal peptide. Residues 29 to 162 (ADRYAVYWNS…KLKVFVRPTN (134 aa)) form the Ephrin RBD domain. N-linked (GlcNAc...) asparagine glycosylation is present at asparagine 37. 2 cysteine pairs are disulfide-bonded: cysteine 62–cysteine 102 and cysteine 90–cysteine 151. Residues 186–205 (EPADDTVHESAEPSRGENAA) form a disordered region. The segment covering 190–200 (DTVHESAEPSR) has biased composition (basic and acidic residues). The GPI-anchor amidated asparagine moiety is linked to residue asparagine 203. Residues 204-228 (AAQTPRIPSRLLAILLFLLAMLLTL) constitute a propeptide, removed in mature form.

It belongs to the ephrin family. In terms of assembly, binds to EPHB2. Interacts with EPHA8; activates EPHA8. Binds to the receptor tyrosine kinases EPHA2, EPHA3 and EPHB1. Forms a ternary EFNA5-EPHA3-ADAM10 complex mediating EFNA5 extracellular domain shedding by ADAM10 which regulates the EFNA5-EPHA3 complex internalization and function.

The protein resides in the cell membrane. Its subcellular location is the membrane. It is found in the caveola. Its function is as follows. Cell surface GPI-bound ligand for Eph receptors, a family of receptor tyrosine kinases which are crucial for migration, repulsion and adhesion during neuronal, vascular and epithelial development. Binds promiscuously Eph receptors residing on adjacent cells, leading to contact-dependent bidirectional signaling into neighboring cells. The signaling pathway downstream of the receptor is referred to as forward signaling while the signaling pathway downstream of the ephrin ligand is referred to as reverse signaling. Induces compartmentalized signaling within a caveolae-like membrane microdomain when bound to the extracellular domain of its cognate receptor. This signaling event requires the activity of the Fyn tyrosine kinase. Activates the EPHA3 receptor to regulate cell-cell adhesion and cytoskeletal organization. With the receptor EPHA2 may regulate lens fiber cells shape and interactions and be important for lens transparency maintenance. May function actively to stimulate axon fasciculation. The interaction of EFNA5 with EPHA5 also mediates communication between pancreatic islet cells to regulate glucose-stimulated insulin secretion. Cognate/functional ligand for EPHA7, their interaction regulates brain development modulating cell-cell adhesion and repulsion. This chain is Ephrin-A5 (EFNA5), found in Homo sapiens (Human).